The chain runs to 918 residues: Pre-pro-metalloprotease PrtV (918 aa).

The N-terminal stretch at 1–23 (MKTIKKTLLAAAIASFFSSGLYA) is a signal peptide. Residues 24–105 (QTPIDLGVVN…QKGPHKARVF (82 aa)) constitute a propeptide that is removed on maturation. His-330 lines the Zn(2+) pocket. Glu-331 is a catalytic residue. Residue His-334 participates in Zn(2+) binding. The Ca(2+) site is built by Ile-757, Asp-782, Asp-821, and Asp-825. PKD domains lie at 758-835 (APVA…TIKV) and 855-918 (VTMW…KVKL). Positions 835 to 918 (VDTPNALPQA…VTTITIKVKL (84 aa)) are excised as a propeptide.

This sequence belongs to the peptidase M6 family. Requires Zn(2+) as cofactor. PrtV is expressed as an inactive, multidomain, 102 kDa pre-pro-metalloprotease. To form a catalytically active protease, PrtV is first secreted, and then it undergoes N- and C-terminal cleavages during envelope translocation to yield a 81 kDa pro-metalloprotease. Outside the cell, the 81 kDa pro-metalloprotease undergoes an auto-cleavage. The two major products of autoproteolysis (37 kDa and 18 kDa) together form the so called 55 kDa active complex.

It localises to the secreted. Calcium plays an important structural role, providing stability to this protein in the cytoplasm. Outside the cell, the decrease of the calcium concentration triggers the autoproteolysis. PrtV activity is increased by 25 mM of Sr(2+) or Mg(2+) and to some extent by Ba(2+); however, Ba(2+) inhibits PrtV at higher concentrations. Completely inhibited by EDTA and 1,10-phenanthroline. Metalloprotease that exhibits a cytotoxic effect leading to cell death. In host tissues, it could play a role in pathogenesis by modulating the stability of the extracellular matrix components such as fibronectin and fibrinogen. Also able to cleave plasminogen. The polypeptide is Pre-pro-metalloprotease PrtV (Vibrio cholerae serotype O1 (strain ATCC 39315 / El Tor Inaba N16961)).